We begin with the raw amino-acid sequence, 941 residues long: Glycine dehydrogenase (decarboxylating) (941 aa).

An N6-(pyridoxal phosphate)lysine modification is found at lysine 692.

It belongs to the GcvP family. The glycine cleavage system is composed of four proteins: P, T, L and H. Pyridoxal 5'-phosphate is required as a cofactor.

It catalyses the reaction N(6)-[(R)-lipoyl]-L-lysyl-[glycine-cleavage complex H protein] + glycine + H(+) = N(6)-[(R)-S(8)-aminomethyldihydrolipoyl]-L-lysyl-[glycine-cleavage complex H protein] + CO2. Functionally, the glycine cleavage system catalyzes the degradation of glycine. The P protein binds the alpha-amino group of glycine through its pyridoxal phosphate cofactor; CO(2) is released and the remaining methylamine moiety is then transferred to the lipoamide cofactor of the H protein. The polypeptide is Glycine dehydrogenase (decarboxylating) (Mycobacterium bovis (strain ATCC BAA-935 / AF2122/97)).